The following is a 386-amino-acid chain: SWI/SNF-related matrix-associated actin-dependent regulator of chromatin subfamily B member 1 (386 aa).

The interval 1–114 is DNA-binding; sequence MMMMALSKTF…DEKYKAVSIS (114 aa).

Belongs to the SNF5 family. Component of the multiprotein chromatin-remodeling complexes SWI/SNF. Component of neural progenitors-specific chromatin remodeling complex (npBAF complex) and the neuron-specific chromatin remodeling complex (nBAF complex). Component of the BAF (SWI/SNF) chromatin remodeling complex. Component of the SWI/SNF-B (PBAF) chromatin remodeling complex. Binds to double-stranded DNA.

It localises to the nucleus. Functionally, involved in chromatin-remodeling. Core component of the BAF (SWI/SNF) complex. This ATP-dependent chromatin-remodeling complex plays important roles in cell proliferation and differentiation, in cellular antiviral activities and inhibition of tumor formation. Belongs to the neural progenitors-specific chromatin remodeling complex (npBAF complex) and the neuron-specific chromatin remodeling complex (nBAF complex) and may play a role in neural development. The chain is SWI/SNF-related matrix-associated actin-dependent regulator of chromatin subfamily B member 1 (SMARCB1) from Gallus gallus (Chicken).